The following is a 391-amino-acid chain: Cytochrome P450 165A3 (391 aa).

Positions 1 to 22 (MFEEKNALRGTEIHRRERFDPG) are disordered. Cysteine 342 is a heme binding site.

It belongs to the cytochrome P450 family. Requires heme as cofactor.

Its pathway is antibiotic biosynthesis; vancomycin biosynthesis. Functionally, involved in the coupling of aromatic side chains of the heptapeptide of vancomycin. The chain is Cytochrome P450 165A3 (cyp165A3) from Amycolatopsis orientalis (Nocardia orientalis).